The primary structure comprises 308 residues: Ribosomal RNA small subunit methyltransferase H (308 aa).

Residues 34 to 36, D54, F80, D101, and Q108 each bind S-adenosyl-L-methionine; that span reads GGH.

The protein belongs to the methyltransferase superfamily. RsmH family.

The protein localises to the cytoplasm. The enzyme catalyses cytidine(1402) in 16S rRNA + S-adenosyl-L-methionine = N(4)-methylcytidine(1402) in 16S rRNA + S-adenosyl-L-homocysteine + H(+). In terms of biological role, specifically methylates the N4 position of cytidine in position 1402 (C1402) of 16S rRNA. This chain is Ribosomal RNA small subunit methyltransferase H, found in Ureaplasma parvum serovar 3 (strain ATCC 27815 / 27 / NCTC 11736).